The primary structure comprises 61 residues: Metallothionein-2A (61 aa).

An N-acetylmethionine modification is found at M1. The segment at 1-29 (MDPNCSCAAGGSCTCAGSCKCKDCKCTSC) is beta. The a divalent metal cation site is built by C5, C7, C13, C15, C19, C21, C24, C26, C29, C33, C34, C36, C37, C41, C44, C48, C50, and C57. The segment at 30–61 (KKSCCSCCPVGCAKCAQGCICKGASDKCSCCA) is alpha. S58 is modified (phosphoserine). A divalent metal cation contacts are provided by C59 and C60.

The protein belongs to the metallothionein superfamily. Type 1 family. In terms of assembly, interacts with EOLA1.

Metallothioneins have a high content of cysteine residues that bind various heavy metals; these proteins are transcriptionally regulated by both heavy metals and glucocorticoids. The protein is Metallothionein-2A (MT2A) of Sus scrofa (Pig).